The primary structure comprises 88 residues: Small ribosomal subunit protein bS20 (88 aa).

The protein belongs to the bacterial ribosomal protein bS20 family.

Functionally, binds directly to 16S ribosomal RNA. The chain is Small ribosomal subunit protein bS20 from Natranaerobius thermophilus (strain ATCC BAA-1301 / DSM 18059 / JW/NM-WN-LF).